Reading from the N-terminus, the 343-residue chain is DNA repair and recombination protein RadA (343 aa).

Position 107–114 (107–114 (GEFGAGKS)) interacts with ATP.

The protein belongs to the eukaryotic RecA-like protein family.

Involved in DNA repair and in homologous recombination. Binds and assemble on single-stranded DNA to form a nucleoprotein filament. Hydrolyzes ATP in a ssDNA-dependent manner and promotes DNA strand exchange between homologous DNA molecules. This is DNA repair and recombination protein RadA from Halobacterium salinarum (strain ATCC 29341 / DSM 671 / R1).